Consider the following 135-residue polypeptide: DNA-directed RNA polymerase subunit omega (135 aa).

It belongs to the RNA polymerase subunit omega family. The RNAP catalytic core consists of 2 alpha, 1 beta, 1 beta' and 1 omega subunit. When a sigma factor is associated with the core the holoenzyme is formed, which can initiate transcription.

It carries out the reaction RNA(n) + a ribonucleoside 5'-triphosphate = RNA(n+1) + diphosphate. Functionally, promotes RNA polymerase assembly. Latches the N- and C-terminal regions of the beta' subunit thereby facilitating its interaction with the beta and alpha subunits. This Sinorhizobium medicae (strain WSM419) (Ensifer medicae) protein is DNA-directed RNA polymerase subunit omega.